Here is a 210-residue protein sequence, read N- to C-terminus: Chaperone protein TorD (210 aa).

It belongs to the TorD/DmsD family. TorD subfamily.

It localises to the cytoplasm. In terms of biological role, involved in the biogenesis of TorA. Acts on TorA before the insertion of the molybdenum cofactor and, as a result, probably favors a conformation of the apoenzyme that is competent for acquiring the cofactor. The polypeptide is Chaperone protein TorD (Salmonella schwarzengrund (strain CVM19633)).